The primary structure comprises 44 residues: Large ribosomal subunit protein bL34 (44 aa).

The protein belongs to the bacterial ribosomal protein bL34 family.

In Wolbachia sp. subsp. Brugia malayi (strain TRS), this protein is Large ribosomal subunit protein bL34.